Reading from the N-terminus, the 151-residue chain is Methylglyoxal synthase (151 aa).

Residues 6-151 (RTMPAHKHVA…DYDAYLAERT (146 aa)) enclose the MGS-like domain. Residues His19, Lys23, 45–48 (TGTT), and 65–66 (SG) each bind substrate. Catalysis depends on Asp71, which acts as the Proton donor/acceptor. His98 contributes to the substrate binding site.

This sequence belongs to the methylglyoxal synthase family.

It carries out the reaction dihydroxyacetone phosphate = methylglyoxal + phosphate. In terms of biological role, catalyzes the formation of methylglyoxal from dihydroxyacetone phosphate. In Vibrio campbellii (strain ATCC BAA-1116), this protein is Methylglyoxal synthase.